Here is a 584-residue protein sequence, read N- to C-terminus: Transcriptional regulator STP2 (584 aa).

Composition is skewed to polar residues over residues 1–11 (MSVAITSNNNK) and 180–202 (AESN…SISD). Disordered regions lie at residues 1–22 (MSVA…PHLK) and 161–214 (KMHP…STVS). The span at 203 to 214 (SPSHSETESTVS) shows a compositional bias: low complexity. A C2H2-type zinc finger spans residues 225-247 (FKCPSCDAEFRVRGYLTRHMKKH). Disordered stretches follow at residues 381–496 (RQKK…PQQP) and 553–584 (QYQP…SMYF). Positions 394–407 (SESSIQSQESESSI) are enriched in low complexity. Over residues 431–441 (QHQHQHHHHVQ) the composition is skewed to basic residues. A compositionally biased stretch (low complexity) spans 442 to 480 (NQHQQHVNQQQSIATPASIYSSSASSTSSYESTHSPYTP). A compositionally biased stretch (polar residues) spans 481–496 (QSSRSPLSHMYNPQQP).

Post-translationally, proteolytically cleaved: activated by the amino acid-induced proteolytic removal of an N-terminal inhibitory domain.

The protein resides in the cell membrane. It is found in the nucleus. Transcription factor involved in the regulation of gene expression in response to extracellular amino acid levels. Synthesized as latent cytoplasmic precursor, which, upon a signal initiated by the plasma membrane SPS amino acid sensor system (including CSY1 and CSH3), becomes proteolytically activated and relocates to the nucleus, where it induces the expression of SPS-sensor-regulated genes. Required for efficient alkalinization through the release of ammonia from the cells produced during the breakdown of amino acids, and subsequent switch to the hyphal form. In Candida albicans (strain SC5314 / ATCC MYA-2876) (Yeast), this protein is Transcriptional regulator STP2 (STP2).